A 79-amino-acid polypeptide reads, in one-letter code: RNA-binding protein Hfq (79 aa).

Residues 10 to 69 (DPFLNALRKEHVPVSIYLVNGIKLQGNIESFDQYVVLLRNTVTQMVYKHAISTVVPARAV) enclose the Sm domain.

This sequence belongs to the Hfq family. As to quaternary structure, homohexamer.

RNA chaperone that binds small regulatory RNA (sRNAs) and mRNAs to facilitate mRNA translational regulation in response to envelope stress, environmental stress and changes in metabolite concentrations. Also binds with high specificity to tRNAs. The sequence is that of RNA-binding protein Hfq from Cupriavidus metallidurans (strain ATCC 43123 / DSM 2839 / NBRC 102507 / CH34) (Ralstonia metallidurans).